Consider the following 151-residue polypeptide: uncharacterized protein (151 aa).

4 residues coordinate [4Fe-4S] cluster: C24, C27, C92, and C129.

Belongs to the complex I 20 kDa subunit family. [4Fe-4S] cluster is required as a cofactor.

This is an uncharacterized protein from Methanocaldococcus jannaschii (strain ATCC 43067 / DSM 2661 / JAL-1 / JCM 10045 / NBRC 100440) (Methanococcus jannaschii).